Consider the following 204-residue polypeptide: MNALIDNRVLALAGVVQALQQVRQIAETGQSETSAVRTAIDSVLRIDAESPEAVYGGIRNLTQGLQLLHDYFGNQLRDQLLPRLTLAVLQLERRFIRDTSIVAAVSTGITQAAHQVEQTGDSAHPEILSTLGALYANTISHLRPRIIVQGNPHYLGQAGVVAEIRAMLLAALRSAVLWRQLNGNLLDFLLTKRAMAAATERALR.

This sequence belongs to the HflD family.

The protein resides in the cytoplasm. It localises to the cell inner membrane. The polypeptide is High frequency lysogenization protein HflD homolog (Xylella fastidiosa (strain M23)).